The primary structure comprises 437 residues: MVIMKKMKDSVLFLVVGLFSLSVLVSQSIAGRVKAPLLQSNTGGLVFSKSFNSIYDTSMYGRLQLNNGLARTPQMGWNSWNFFACNINETVIKETADALVSSGLADLGYIHVNIDDCWSNLLRDSEGQLVPHPETFPSGIKLLADYVHSKGLKLGIYSDAGVFTCEVHPGSLFHEVDDADIFASWGVDYLKYDNCFNLGIKPIERYPPMRDALNATGRSIFYSLCEWGVDDPALWAKEVGNSWRTTDDINDTWASMTTIADLNNKWAAYAGPGGWNDPDMLEIGNGGMTYEEYRGHFSIWALMKAPLLIGCDVRNMTAETLEILSNKEIIAVNQDPLGVQGRKIQANGENDCQQVWSGPLSGDRMVVALWNRCSEPATITASWDMIGLESTISVSVRDLWQHKDVTENTSGSFEAQVDAHDCHMYVLTPQTVSHSDV.

An N-terminal signal peptide occupies residues 1-30 (MVIMKKMKDSVLFLVVGLFSLSVLVSQSIA). 2 disulfide bridges follow: Cys85–Cys117 and Cys165–Cys195. An N-linked (GlcNAc...) asparagine glycan is attached at Asn88. Residues 115 to 116 (DD) and Lys191 contribute to the substrate site. Catalysis depends on Asp193, which acts as the Nucleophile. A glycan (N-linked (GlcNAc...) asparagine) is linked at Asn214. Substrate contacts are provided by residues 226–230 (EWGVD), Arg244, and Asp248. The Proton donor role is filled by Asp248. Asn250, Asn315, and Asn408 each carry an N-linked (GlcNAc...) asparagine glycan.

Belongs to the glycosyl hydrolase 27 family. In terms of assembly, homodimer.

It localises to the secreted. Its subcellular location is the cell wall. The protein localises to the extracellular space. The protein resides in the apoplast. It is found in the vacuole. It carries out the reaction Hydrolysis of terminal, non-reducing alpha-D-galactose residues in alpha-D-galactosides, including galactose oligosaccharides, galactomannans and galactolipids.. May regulate leaf (and possibly other organ) development by functioning in cell wall loosening and cell wall expansion. The polypeptide is Alpha-galactosidase 3 (Arabidopsis thaliana (Mouse-ear cress)).